A 126-amino-acid chain; its full sequence is Cytochrome c2 (126 aa).

Heme c is bound by residues Cys-17, Cys-20, His-21, and Met-101.

The protein belongs to the cytochrome c family. In terms of processing, binds 1 heme c group covalently per subunit.

It localises to the periplasm. Its function is as follows. Cytochrome c2 is found mainly in purple, non-sulfur, photosynthetic bacteria where it functions as the electron donor to the oxidized bacteriochlorophyll in the photophosphorylation pathway. However, it may also have a role in the respiratory chain and is found in some non-photosynthetic bacteria. In Rhodovulum adriaticum (Rhodopseudomonas adriatica), this protein is Cytochrome c2.